The following is a 671-amino-acid chain: DNA ligase (671 aa).

NAD(+) is bound by residues 32 to 36, 81 to 82, and Glu113; these read DAEYD and SL. Lys115 acts as the N6-AMP-lysine intermediate in catalysis. Arg136, Glu173, Lys290, and Lys314 together coordinate NAD(+). The Zn(2+) site is built by Cys408, Cys411, Cys426, and Cys432. The region spanning 593-671 is the BRCT domain; that stretch reads EIDSPFAGKT…EAEMIRLLGA (79 aa).

This sequence belongs to the NAD-dependent DNA ligase family. LigA subfamily. It depends on Mg(2+) as a cofactor. Requires Mn(2+) as cofactor.

The enzyme catalyses NAD(+) + (deoxyribonucleotide)n-3'-hydroxyl + 5'-phospho-(deoxyribonucleotide)m = (deoxyribonucleotide)n+m + AMP + beta-nicotinamide D-nucleotide.. Functionally, DNA ligase that catalyzes the formation of phosphodiester linkages between 5'-phosphoryl and 3'-hydroxyl groups in double-stranded DNA using NAD as a coenzyme and as the energy source for the reaction. It is essential for DNA replication and repair of damaged DNA. The sequence is that of DNA ligase from Salmonella newport (strain SL254).